The sequence spans 401 residues: Sodium/glutamate symporter (401 aa).

The Periplasmic segment spans residues 1–6 (MFHLDT). Residues 7 to 24 (LATLVAATLTLLLGRKLV) form a helical membrane-spanning segment. Residues 25-32 (HSVSFLKK) lie on the Cytoplasmic side of the membrane. The chain crosses the membrane as a helical span at residues 33 to 52 (YTIPEPVAGGLLVALALLVL). The Periplasmic portion of the chain corresponds to 53–69 (KKSMGWEVNFDMSLRDP). Residues 70–87 (LMLAFFATIGLNANIASL) form a helical membrane-spanning segment. Over 88-93 (RAGGRV) the chain is Cytoplasmic. A helical transmembrane segment spans residues 94–116 (VGIFLIVVVGLLVMQNAIGIGMA). At 117 to 156 (SLLGLDPLMGLLAGSITLSGGHGTGAAWSKLFIERYGFTN) the chain is on the periplasmic side. Residues 157 to 179 (ATEVAMACATFGLVLGGLIGGPV) form a helical membrane-spanning segment. Residues 180 to 212 (ARYLVKHSTTPNGIPDDQEVPTAFEKPDVGRMI) lie on the Cytoplasmic side of the membrane. Residues 213-235 (TSLVLIETIALIAICLTVGKIVA) form a helical membrane-spanning segment. The Periplasmic segment spans residues 236 to 244 (QLLAGTAFE). A helical transmembrane segment spans residues 245–267 (LPTFVCVLFVGVILSNGLSIMGF). The Cytoplasmic segment spans residues 268–276 (YRVFERAVS). The chain crosses the membrane as a helical span at residues 277-292 (VLGNVSLSLFLAMALM). Over 293 to 301 (GLKLWELAS) the chain is Periplasmic. The helical transmembrane segment at 302–324 (LALPMLAILVVQTIFMALYAIFV) threads the bilayer. The Cytoplasmic segment spans residues 325-367 (TWRMMGKNYDAAVLAAGHCGFGLGATPTAIANMQAITERFGPS). The chain crosses the membrane as a helical span at residues 368-390 (HMAFLVVPMVGAFFIDIVNALVI). Residues 391-401 (KLYLMLPIFAG) are Periplasmic-facing.

This sequence belongs to the glutamate:Na(+) symporter (ESS) (TC 2.A.27) family.

Its subcellular location is the cell inner membrane. Inhibited by the uncoupler carbonylcyanide m-chlorophenylhydrazone (CCCP) and the ionophore monensin. Functionally, catalyzes the sodium-dependent, binding-protein-independent transport of glutamate. The sequence is that of Sodium/glutamate symporter from Escherichia coli (strain K12).